Here is a 564-residue protein sequence, read N- to C-terminus: Proline--tRNA ligase (564 aa).

It belongs to the class-II aminoacyl-tRNA synthetase family. ProS type 1 subfamily. Homodimer.

The protein resides in the cytoplasm. The catalysed reaction is tRNA(Pro) + L-proline + ATP = L-prolyl-tRNA(Pro) + AMP + diphosphate. Functionally, catalyzes the attachment of proline to tRNA(Pro) in a two-step reaction: proline is first activated by ATP to form Pro-AMP and then transferred to the acceptor end of tRNA(Pro). As ProRS can inadvertently accommodate and process non-cognate amino acids such as alanine and cysteine, to avoid such errors it has two additional distinct editing activities against alanine. One activity is designated as 'pretransfer' editing and involves the tRNA(Pro)-independent hydrolysis of activated Ala-AMP. The other activity is designated 'posttransfer' editing and involves deacylation of mischarged Ala-tRNA(Pro). The misacylated Cys-tRNA(Pro) is not edited by ProRS. In Xylella fastidiosa (strain Temecula1 / ATCC 700964), this protein is Proline--tRNA ligase.